The primary structure comprises 909 residues: Ribosome-releasing factor 2, mitochondrial (909 aa).

The transit peptide at 1–15 (MVAAPLLRAHQAARL) directs the protein to the mitochondrion. Residues 57-367 (DRTRNIGIIA…AVTNLLPSPP (311 aa)) enclose the tr-type G domain. 66 to 73 (AHIDAGKT) serves as a coordination point for GTP. The segment at 121-148 (WPPQTAGDGNTTPQEPQTPRSASSHTVN) is disordered. Residues 127-148 (GDGNTTPQEPQTPRSASSHTVN) show a composition bias toward polar residues. GTP-binding positions include 151–155 (DTPGH) and 205–208 (NKLD).

Belongs to the TRAFAC class translation factor GTPase superfamily. Classic translation factor GTPase family. EF-G/EF-2 subfamily.

The protein localises to the mitochondrion. In terms of biological role, mitochondrial GTPase that mediates the disassembly of ribosomes from messenger RNA at the termination of mitochondrial protein biosynthesis. Not involved in the GTP-dependent ribosomal translocation step during translation elongation. This is Ribosome-releasing factor 2, mitochondrial (mef2) from Aspergillus flavus (strain ATCC 200026 / FGSC A1120 / IAM 13836 / NRRL 3357 / JCM 12722 / SRRC 167).